The chain runs to 357 residues: Dihydroorotate dehydrogenase (quinone) (357 aa).

FMN contacts are provided by residues 67–71 (AGFDK) and threonine 91. Lysine 71 is a substrate binding site. A substrate-binding site is contributed by 116–120 (NRMGF). FMN contacts are provided by asparagine 153 and asparagine 186. Asparagine 186 contacts substrate. The active-site Nucleophile is the serine 189. Residue asparagine 191 coordinates substrate. FMN contacts are provided by lysine 228 and threonine 256. 257–258 (NT) is a substrate binding site. FMN contacts are provided by residues glycine 282, glycine 311, and 332–333 (YT).

Belongs to the dihydroorotate dehydrogenase family. Type 2 subfamily. In terms of assembly, monomer. The cofactor is FMN.

The protein resides in the cell membrane. It carries out the reaction (S)-dihydroorotate + a quinone = orotate + a quinol. The protein operates within pyrimidine metabolism; UMP biosynthesis via de novo pathway; orotate from (S)-dihydroorotate (quinone route): step 1/1. In terms of biological role, catalyzes the conversion of dihydroorotate to orotate with quinone as electron acceptor. The protein is Dihydroorotate dehydrogenase (quinone) of Arthrobacter sp. (strain FB24).